A 153-amino-acid chain; its full sequence is IAA acetyltransferase (153 aa).

The region spanning 4–153 (VTIARESPLQ…PLSLFMEKPL (150 aa)) is the N-acetyltransferase domain.

Functionally, participates in the tryptophan-dependent indole-3-acetic acid production, which is a phytohormone released by A.brasilense. The sequence is that of IAA acetyltransferase from Azospirillum brasilense.